The sequence spans 631 residues: Bromodomain-containing protein 9 (631 aa).

Disordered stretches follow at residues 1–26 and 39–116; these read MGKKHKKYRPEWRAVEGDYEDKPLEK and VTEL…TLPK. Basic and acidic residues-rich tracts occupy residues 9-26 and 50-63; these read RPEWRAVEGDYEDKPLEK and SYYDDRSDHEWERH. A compositionally biased stretch (basic residues) spans 64-73; that stretch reads KEKKKKKKKK. A compositionally biased stretch (basic and acidic residues) spans 74–85; the sequence is SEKEKYADDDER. Residues 86 to 96 are compositionally biased toward basic residues; sequence RRRKEEKKKKR. The Bromo domain occupies 166–270; sequence NEATPHQQLL…HTGFKMMSKQ (105 aa). A histone H4K5ac H4K8ac and histone H4K5bu H4K8bu binding region spans residues 244–246; it reads VYN. The tract at residues 571 to 631 is disordered; the sequence is ASVDRVGSRP…SPEPGSTANS (61 aa). Low complexity predominate over residues 581–590; the sequence is SSNLSSLSNA.

Binds acetylated histones H3 and H4. Binds butyrylated histone H4.

Its subcellular location is the nucleus. Its function is as follows. Plays a role in chromatin remodeling and regulation of transcription. Acts as a chromatin reader that recognizes and binds acylated histones: binds histones that are acetylated and/or butyrylated. This Danio rerio (Zebrafish) protein is Bromodomain-containing protein 9 (brd9).